The following is a 238-amino-acid chain: Ribonuclease PH (238 aa).

Residues Arg-86 and 124 to 126 (GTR) each bind phosphate.

Belongs to the RNase PH family. Homohexameric ring arranged as a trimer of dimers.

It carries out the reaction tRNA(n+1) + phosphate = tRNA(n) + a ribonucleoside 5'-diphosphate. Functionally, phosphorolytic 3'-5' exoribonuclease that plays an important role in tRNA 3'-end maturation. Removes nucleotide residues following the 3'-CCA terminus of tRNAs; can also add nucleotides to the ends of RNA molecules by using nucleoside diphosphates as substrates, but this may not be physiologically important. Probably plays a role in initiation of 16S rRNA degradation (leading to ribosome degradation) during starvation. This chain is Ribonuclease PH, found in Yersinia enterocolitica serotype O:8 / biotype 1B (strain NCTC 13174 / 8081).